The sequence spans 535 residues: Bifunctional purine biosynthesis protein PurH (535 aa).

Residues M1–T145 form the MGS-like domain.

Belongs to the PurH family.

The catalysed reaction is (6R)-10-formyltetrahydrofolate + 5-amino-1-(5-phospho-beta-D-ribosyl)imidazole-4-carboxamide = 5-formamido-1-(5-phospho-D-ribosyl)imidazole-4-carboxamide + (6S)-5,6,7,8-tetrahydrofolate. It carries out the reaction IMP + H2O = 5-formamido-1-(5-phospho-D-ribosyl)imidazole-4-carboxamide. The protein operates within purine metabolism; IMP biosynthesis via de novo pathway; 5-formamido-1-(5-phospho-D-ribosyl)imidazole-4-carboxamide from 5-amino-1-(5-phospho-D-ribosyl)imidazole-4-carboxamide (10-formyl THF route): step 1/1. It functions in the pathway purine metabolism; IMP biosynthesis via de novo pathway; IMP from 5-formamido-1-(5-phospho-D-ribosyl)imidazole-4-carboxamide: step 1/1. The protein is Bifunctional purine biosynthesis protein PurH of Variovorax paradoxus (strain S110).